The primary structure comprises 429 residues: Serine hydroxymethyltransferase 1 (429 aa).

(6S)-5,6,7,8-tetrahydrofolate contacts are provided by residues leucine 125 and 129 to 131 (GHL). The residue at position 234 (lysine 234) is an N6-(pyridoxal phosphate)lysine.

It belongs to the SHMT family. As to quaternary structure, homodimer. The cofactor is pyridoxal 5'-phosphate.

It is found in the cytoplasm. The enzyme catalyses (6R)-5,10-methylene-5,6,7,8-tetrahydrofolate + glycine + H2O = (6S)-5,6,7,8-tetrahydrofolate + L-serine. Its pathway is one-carbon metabolism; tetrahydrofolate interconversion. It participates in amino-acid biosynthesis; glycine biosynthesis; glycine from L-serine: step 1/1. In terms of biological role, catalyzes the reversible interconversion of serine and glycine with tetrahydrofolate (THF) serving as the one-carbon carrier. This reaction serves as the major source of one-carbon groups required for the biosynthesis of purines, thymidylate, methionine, and other important biomolecules. Also exhibits THF-independent aldolase activity toward beta-hydroxyamino acids, producing glycine and aldehydes, via a retro-aldol mechanism. This chain is Serine hydroxymethyltransferase 1, found in Agrobacterium fabrum (strain C58 / ATCC 33970) (Agrobacterium tumefaciens (strain C58)).